The chain runs to 73 residues: Defensin-like protein 87 (73 aa).

The first 27 residues, 1–27, serve as a signal peptide directing secretion; sequence MTTKKTSSVVLPLLLVFALILMPMVAG. Intrachain disulfides connect C33-C71, C45-C69, and C49-C70.

It belongs to the DEFL family.

The protein localises to the secreted. This chain is Defensin-like protein 87, found in Arabidopsis thaliana (Mouse-ear cress).